A 200-amino-acid polypeptide reads, in one-letter code: uncharacterized protein (200 aa).

The disordered stretch occupies residues 1-21 (MSNSAQRDARNSRDESARASD). Basic and acidic residues predominate over residues 7–21 (RDARNSRDESARASD).

This is an uncharacterized protein from Mycobacterium tuberculosis (strain ATCC 25618 / H37Rv).